We begin with the raw amino-acid sequence, 215 residues long: Glutathione S-transferase stcT (215 aa).

A GST N-terminal domain is found at 2 to 82 (PFGTLYTRPF…YDSNTTLLGT (81 aa)). Glutathione-binding residues include lysine 52 and glutamate 66. Lysine 52 contributes to the substrate binding site. Residues 83–211 (TGQEYASIIR…PVLAEYEMPI (129 aa)) enclose the GST C-terminal domain.

The protein belongs to the GST superfamily. It depends on glutathione as a cofactor.

It functions in the pathway mycotoxin biosynthesis; sterigmatocystin biosynthesis. In terms of biological role, glutathione S-transferase; part of the gene cluster that mediates the biosynthesis of sterigmatocystin (ST), a polyketide-derived furanocoumarin which is part of the most toxic and carcinogenic compounds among the known mycotoxins. The first step in the biosynthesis of sterigmatocystin is the production of hexanoate by the fatty acid synthase (FAS) units stcJ and stcK. The polyketide backbone is assembled by the non-reducing polyketide synthase stcA by condensation of the starter hexanoyl-CoA and 7 malonyl-CoA extender units followed by cyclization and release of norsolorinic acid. Norsolorinic acid is the first stable intermediate in the biosynthesis of sterigmatocystin and is converted into averantin (AVN) by the ketoreductase stcE which reduces the hexanoate ketone to an alcohol. Averantin is then oxidized into 5'-hydroxyaverantin (HAVN) by the cytochrome P450 monooxygenase stcF. 5'-hydroxyaverantin is further converted to 5'-oxyaverantin (OAVN) by the 5'-hydroxyaverantin dehydrogenase stcG. The next step is the conversion of OAVN into averufin (AVF) which is catalyzed by a yet to be identified enzyme. The cytochrome P450 monooxygenase stcB and the flavin-binding monooxygenase stcW are both required for the conversion of averufin to 1-hydroxyversicolorone. The esterase stcI probably catalyzes the formation of versiconal hemiacetal acetate from 1-hydroxyversicolorone. The oxydoreductase stcN then probably catalyzes the biosynthetic step from versiconal to versicolorin B (VERB). The next step is performed by the versicolorin B desaturase stcL to produce versicolorin A (VERA). The ketoreductase stcU and the cytochrome P450 monooxygenase stcS are involved in the conversion of versicolorin A to demethylsterigmatocystin. The Baeyer-Villiger oxidas stcQ and the reductase stcR might be involved in the biosynthetic step from versicolorin A to demethylsterigmatocystin. The final step in the biosynthesis of sterigmatocystin is the methylation of demethylsterigmatocystin catalyzed by the methyltransferase stcP. The chain is Glutathione S-transferase stcT from Emericella nidulans (strain FGSC A4 / ATCC 38163 / CBS 112.46 / NRRL 194 / M139) (Aspergillus nidulans).